A 174-amino-acid chain; its full sequence is Protein C2-DOMAIN ABA-RELATED 6 (174 aa).

The region spanning 1 to 115 (MEKTEEEVEM…HKLGLKELPH (115 aa)) is the C2 domain. The Ca(2+) site is built by arginine 30, aspartate 31, aspartate 36, aspartate 82, lysine 83, aspartate 84, and aspartate 90.

It belongs to the plant CAR protein family. Binds to PYR/PYL/RCAR abscisic acid intracellular receptors in an ABA-independent manner, both at the plasma membrane and in the nucleus. Subunit of a complex made of CAR6, PHOT1 and RPT3/NPH3. Interacts directly with RPT3/NPH3.

The protein localises to the cell membrane. The protein resides in the nucleus. Its function is as follows. Stimulates the GTPase/ATPase activities of Obg-like ATPases. Mediates the transient calcium-dependent interaction of PYR/PYL/RCAR abscisic acid (ABA) receptors with the plasma membrane and thus regulates ABA sensitivity. Prevents hypocotyl bending as well as gravitropic response under blue light conditions. This chain is Protein C2-DOMAIN ABA-RELATED 6, found in Arabidopsis thaliana (Mouse-ear cress).